Reading from the N-terminus, the 222-residue chain is Deoxyribose-phosphate aldolase (222 aa).

The active-site Proton donor/acceptor is Asp94. Catalysis depends on Lys156, which acts as the Schiff-base intermediate with acetaldehyde. Lys185 functions as the Proton donor/acceptor in the catalytic mechanism.

This sequence belongs to the DeoC/FbaB aldolase family. DeoC type 1 subfamily.

The protein resides in the cytoplasm. The enzyme catalyses 2-deoxy-D-ribose 5-phosphate = D-glyceraldehyde 3-phosphate + acetaldehyde. The protein operates within carbohydrate degradation; 2-deoxy-D-ribose 1-phosphate degradation; D-glyceraldehyde 3-phosphate and acetaldehyde from 2-deoxy-alpha-D-ribose 1-phosphate: step 2/2. In terms of biological role, catalyzes a reversible aldol reaction between acetaldehyde and D-glyceraldehyde 3-phosphate to generate 2-deoxy-D-ribose 5-phosphate. The polypeptide is Deoxyribose-phosphate aldolase (Malacoplasma penetrans (strain HF-2) (Mycoplasma penetrans)).